The chain runs to 63 residues: uncharacterized protein (63 aa).

This is an uncharacterized protein from Homo sapiens (Human).